The sequence spans 529 residues: T-complex protein 1 subunit delta (529 aa).

This sequence belongs to the TCP-1 chaperonin family. As to quaternary structure, heterooligomeric complex of about 850 to 900 kDa that forms two stacked rings, 12 to 16 nm in diameter.

The protein localises to the cytoplasm. In terms of biological role, molecular chaperone; assists the folding of proteins upon ATP hydrolysis. Known to play a role, in vitro, in the folding of actin and tubulin. This Eremothecium gossypii (strain ATCC 10895 / CBS 109.51 / FGSC 9923 / NRRL Y-1056) (Yeast) protein is T-complex protein 1 subunit delta (CCT4).